Reading from the N-terminus, the 465-residue chain is Iron-sulfur cluster assembly SufBD family protein SAR0880 (465 aa).

Belongs to the iron-sulfur cluster assembly SufBD family.

The chain is Iron-sulfur cluster assembly SufBD family protein SAR0880 from Staphylococcus aureus (strain MRSA252).